Reading from the N-terminus, the 161-residue chain is Ribosomal RNA large subunit methyltransferase H (161 aa).

S-adenosyl-L-methionine-binding positions include Leu78, Gly110, and 129-134; that span reads LGRMTF.

Belongs to the RNA methyltransferase RlmH family. As to quaternary structure, homodimer.

Its subcellular location is the cytoplasm. It catalyses the reaction pseudouridine(1915) in 23S rRNA + S-adenosyl-L-methionine = N(3)-methylpseudouridine(1915) in 23S rRNA + S-adenosyl-L-homocysteine + H(+). Its function is as follows. Specifically methylates the pseudouridine at position 1915 (m3Psi1915) in 23S rRNA. The polypeptide is Ribosomal RNA large subunit methyltransferase H (Symbiobacterium thermophilum (strain DSM 24528 / JCM 14929 / IAM 14863 / T)).